The chain runs to 508 residues: MSRFVQDLSKAMSQDGASQFQEVIRQELELSVKKELEKILTTAPSHEFEHTKKDLDGFRKLFHRFLQEKGPSVDWGKIQRPPEDSIQPYEKIKARGLPDNVSSVLNKLVVVKLNGGLGTSMGCKGPKSLIGVRNENTFLDLTVQQIEHLNKTYDTDVPLVLMNSFNTDEDTKKILQKYNHCRVKIYTFNQSRYPRINKESLLPVAKNVSYSGENTEAWYPPGHGDIYASFYNSGLLDTFIGEGKEYIFVSNIDNLGATVDLYILNHLMNPPNGKPCEFVMEVTNKTRADVKGGTLTQYEGKLRLVEIAQVPKAHVDEFKSVSKFKIFNTNNLWISLAAVKRLQEQNAIDMEIIVNPKTLDGGLNVIQLETAVGAAIKSFENSLGINVPRSRFLPVKTTSDLLLVMSNLYSLNAGSLTMSEKREFPTVPLVKLGSSFTKVQDYLRRFESIPDMLELDHLTVSGDVTFGKNVSLKGTVIIIANHGDRIDIPPGAVLENKIVSGNLRILDH.

Ser2 bears the Blocked amino end (Ser) mark. Ser13 is modified (phosphoserine). UTP contacts are provided by residues 113–116, Lys127, Gln190, and Gly222; that span reads LNGG. 115–116 serves as a coordination point for substrate; the sequence is GG. Lys127 provides a ligand contact to Mg(2+). Substrate contacts are provided by residues His223 and 251-253; that span reads NID. Residues Asp253 and Lys396 each contribute to the UTP site. Position 253 (Asp253) interacts with Mg(2+). Lys396 is an active-site residue. Thr426 is subject to Phosphothreonine. The residue at position 434 (Ser434) is a Phosphoserine. Lys438 bears the N6-acetyllysine mark. 2 positions are modified to phosphoserine: Ser448 and Ser461. Residues 457–508 form an oligomerization region; it reads HLTVSGDVTFGKNVSLKGTVIIIANHGDRIDIPPGAVLENKIVSGNLRILDH. The segment at 502–503 is critical for end-to-end subunit interaction; it reads NL.

The protein belongs to the UDPGP type 1 family. As to quaternary structure, homooctamer.

Its subcellular location is the cytoplasm. The catalysed reaction is alpha-D-glucose 1-phosphate + UTP + H(+) = UDP-alpha-D-glucose + diphosphate. It functions in the pathway glycan biosynthesis; glycogen biosynthesis. Its function is as follows. UTP--glucose-1-phosphate uridylyltransferase catalyzing the conversion of glucose-1-phosphate into UDP-glucose, a crucial precursor for the production of glycogen. This is UTP--glucose-1-phosphate uridylyltransferase (UGP2) from Bos taurus (Bovine).